A 434-amino-acid chain; its full sequence is Histidinol dehydrogenase (434 aa).

NAD(+) is bound by residues tyrosine 130, glutamine 188, and asparagine 211. Positions 237, 259, and 262 each coordinate substrate. Zn(2+) contacts are provided by glutamine 259 and histidine 262. Active-site proton acceptor residues include glutamate 326 and histidine 327. Substrate is bound by residues histidine 327, aspartate 360, glutamate 414, and histidine 419. Aspartate 360 lines the Zn(2+) pocket. Histidine 419 is a Zn(2+) binding site.

The protein belongs to the histidinol dehydrogenase family. As to quaternary structure, homodimer. Requires Zn(2+) as cofactor.

It carries out the reaction L-histidinol + 2 NAD(+) + H2O = L-histidine + 2 NADH + 3 H(+). The protein operates within amino-acid biosynthesis; L-histidine biosynthesis; L-histidine from 5-phospho-alpha-D-ribose 1-diphosphate: step 9/9. In terms of biological role, catalyzes the sequential NAD-dependent oxidations of L-histidinol to L-histidinaldehyde and then to L-histidine. In Shigella sonnei (strain Ss046), this protein is Histidinol dehydrogenase.